Reading from the N-terminus, the 28-residue chain is leu operon leader peptide (28 aa).

Functionally, involved in control of the biosynthesis of leucine. In Shigella flexneri, this protein is leu operon leader peptide (leuL).